The sequence spans 337 residues: Histidine N-acetyltransferase (337 aa).

Residues 1–2 (MK) constitute a propeptide, removed in mature form. The N-acetyltransferase domain occupies 21-157 (LQFSVATEED…GILLMRFRAE (137 aa)).

As to expression, expressed exclusively in the brain and lens.

The catalysed reaction is L-histidine + acetyl-CoA = N(alpha)-acetyl-L-histidine + CoA + H(+). In terms of biological role, enzyme responsible for the N-acetyl-histidine (NAH) synthesis, which is a major constituent of brain and lens of ectothermic vertebrates. This Oreochromis niloticus (Nile tilapia) protein is Histidine N-acetyltransferase (hisat).